We begin with the raw amino-acid sequence, 233 residues long: Membrane steroid-binding protein 2 (233 aa).

Residues 23 to 43 traverse the membrane as a helical segment; sequence AFFTVLALAFAVYQVVSGFFV. In terms of domain architecture, Cytochrome b5 heme-binding spans 70 to 167; that stretch reads EITEEELKLY…SKYVKVGTIQ (98 aa). Residues 70–167 form a steroid-binding region; sequence EITEEELKLY…SKYVKVGTIQ (98 aa). Composition is skewed to basic and acidic residues over residues 169 to 181 and 202 to 224; these read KDGE…EPSE and THDE…KDVA. The disordered stretch occupies residues 169-233; the sequence is KDGEGKESSE…ATDDDDAAKE (65 aa). Residue Thr-225 is modified to Phosphothreonine.

This sequence belongs to the cytochrome b5 family. MAPR subfamily.

The protein localises to the cell membrane. The chain is Membrane steroid-binding protein 2 (MSBP2) from Arabidopsis thaliana (Mouse-ear cress).